The following is a 187-amino-acid chain: Shikimate kinase (187 aa).

14–19 is an ATP binding site; the sequence is GSGKST. A Mg(2+)-binding site is contributed by Ser18. Substrate is bound by residues Asp36, Arg60, and Gly82. Residue Arg120 participates in ATP binding. A substrate-binding site is contributed by Arg147.

This sequence belongs to the shikimate kinase family. Monomer. It depends on Mg(2+) as a cofactor.

The protein localises to the cytoplasm. The catalysed reaction is shikimate + ATP = 3-phosphoshikimate + ADP + H(+). Its pathway is metabolic intermediate biosynthesis; chorismate biosynthesis; chorismate from D-erythrose 4-phosphate and phosphoenolpyruvate: step 5/7. Functionally, catalyzes the specific phosphorylation of the 3-hydroxyl group of shikimic acid using ATP as a cosubstrate. This Chlorobaculum parvum (strain DSM 263 / NCIMB 8327) (Chlorobium vibrioforme subsp. thiosulfatophilum) protein is Shikimate kinase.